The chain runs to 397 residues: Acetate kinase (397 aa).

Position 8 (Asn8) interacts with Mg(2+). Residue Lys15 coordinates ATP. A substrate-binding site is contributed by Arg90. Residue Asp147 is the Proton donor/acceptor of the active site. Residues 207–211 (HLGAG), 283–285 (DMR), and 330–334 (GVGEN) each bind ATP. Glu383 contributes to the Mg(2+) binding site.

It belongs to the acetokinase family. Homodimer. Requires Mg(2+) as cofactor. The cofactor is Mn(2+).

The protein localises to the cytoplasm. The enzyme catalyses acetate + ATP = acetyl phosphate + ADP. It functions in the pathway metabolic intermediate biosynthesis; acetyl-CoA biosynthesis; acetyl-CoA from acetate: step 1/2. Functionally, catalyzes the formation of acetyl phosphate from acetate and ATP. Can also catalyze the reverse reaction. This Fructilactobacillus sanfranciscensis (Lactobacillus sanfranciscensis) protein is Acetate kinase.